The following is a 245-amino-acid chain: Dehydrogenase/reductase SDR family member 6 (245 aa).

NAD(+) is bound by residues glutamine 16–isoleucine 18, aspartate 37, and aspartate 58. A substrate-binding site is contributed by arginine 144. The Proton acceptor role is filled by tyrosine 147. NAD(+) is bound by residues lysine 151 and valine 180–serine 184. 2 residues coordinate substrate: arginine 188 and arginine 205.

It belongs to the short-chain dehydrogenases/reductases (SDR) family. In terms of assembly, homotetramer. Detected in liver (at protein level).

The protein localises to the cytoplasm. It catalyses the reaction cis-4-hydroxy-L-proline + NAD(+) = 4-oxo-L-proline + NADH + H(+). It carries out the reaction (R)-3-hydroxybutanoate + NAD(+) = acetoacetate + NADH + H(+). The protein operates within amino-acid metabolism. It functions in the pathway siderophore biosynthesis. Functionally, NAD(H)-dependent dehydrogenase/reductase with a preference for cyclic substrates. Catalyzes stereoselective conversion of 4-oxo-L-proline to cis-4-hydroxy-L-proline, likely a detoxification mechanism for ketoprolines. Mediates the formation of 2,5-dihydroxybenzoate (2,5-DHBA), a siderophore that chelates free cytoplasmic iron and associates with LCN2, thereby regulating iron transport and homeostasis while protecting cells against free radical-induced oxidative stress. The iron-siderophore complex is imported into mitochondria, providing an iron source for mitochondrial metabolic processes in particular heme synthesis. May act as a 3-hydroxybutyrate dehydrogenase. The sequence is that of Dehydrogenase/reductase SDR family member 6 from Homo sapiens (Human).